The chain runs to 335 residues: Nod factor export ATP-binding protein I (335 aa).

Residues 37–267 form the ABC transporter domain; the sequence is IDVASVTKSY…KIGCQVIEIY (231 aa). 69–76 serves as a coordination point for ATP; that stretch reads GPNGAGKS.

This sequence belongs to the ABC transporter superfamily. Lipooligosaccharide exporter (TC 3.A.1.102) family. The complex is composed of two ATP-binding proteins (NodI) and two transmembrane proteins (NodJ).

It is found in the cell inner membrane. Part of the ABC transporter complex NodIJ involved in the export of the nodulation factors (Nod factors), the bacterial signal molecules that induce symbiosis and subsequent nodulation induction. Nod factors are LCO (lipo-chitin oligosaccharide), a modified beta-1,4-linked N-acetylglucosamine oligosaccharide. This subunit is responsible for energy coupling to the transport system. This is Nod factor export ATP-binding protein I from Rhizobium meliloti (strain 1021) (Ensifer meliloti).